We begin with the raw amino-acid sequence, 256 residues long: Ribonuclease HII (256 aa).

The RNase H type-2 domain occupies 67-255; that stretch reads QLVGGVDEVG…VSEMVGLKKA (189 aa). A divalent metal cation-binding residues include Asp73, Glu74, and Asp165.

It belongs to the RNase HII family. The cofactor is Mn(2+). Mg(2+) serves as cofactor.

Its subcellular location is the cytoplasm. The catalysed reaction is Endonucleolytic cleavage to 5'-phosphomonoester.. Functionally, endonuclease that specifically degrades the RNA of RNA-DNA hybrids. This is Ribonuclease HII from Lactobacillus delbrueckii subsp. bulgaricus (strain ATCC 11842 / DSM 20081 / BCRC 10696 / JCM 1002 / NBRC 13953 / NCIMB 11778 / NCTC 12712 / WDCM 00102 / Lb 14).